The following is a 588-amino-acid chain: Proline--tRNA ligase (588 aa).

It belongs to the class-II aminoacyl-tRNA synthetase family. ProS type 1 subfamily. As to quaternary structure, homodimer.

It is found in the cytoplasm. It catalyses the reaction tRNA(Pro) + L-proline + ATP = L-prolyl-tRNA(Pro) + AMP + diphosphate. Its function is as follows. Catalyzes the attachment of proline to tRNA(Pro) in a two-step reaction: proline is first activated by ATP to form Pro-AMP and then transferred to the acceptor end of tRNA(Pro). As ProRS can inadvertently accommodate and process non-cognate amino acids such as alanine and cysteine, to avoid such errors it has two additional distinct editing activities against alanine. One activity is designated as 'pretransfer' editing and involves the tRNA(Pro)-independent hydrolysis of activated Ala-AMP. The other activity is designated 'posttransfer' editing and involves deacylation of mischarged Ala-tRNA(Pro). The misacylated Cys-tRNA(Pro) is not edited by ProRS. In Corynebacterium efficiens (strain DSM 44549 / YS-314 / AJ 12310 / JCM 11189 / NBRC 100395), this protein is Proline--tRNA ligase.